The primary structure comprises 427 residues: MGMTTAQKIFSAHLVDEPFAGTKVLSIDVVMCHEITTPIAIADLMARGKDRVFDPTKIKAVIDHVTPSKDSKTATQAKMLRDWARRHDIKDFFDIGANGVCHALFPEKGFIRPGNTVIMGDSHTCTHGAFGAFAAGVGTTDLEVGILKGVCAFREPKTIRVNLNGTLPKGVFAKDAILRVIGHLGVNGATDRVIEFGGPVVAQMTMESRMTLCNMAIEAGGTSGICMPDQVTVDYLWPFISGSFGSKEEALAAYSVWCSDADAAYEQVIDLDLSDLAPLCTFGYKPDQVKSVTEMAGTQVDQVYLGSCTNGRLEDLRVAAQILKGKKIASHVRAILSPATPQIYKDAVAEGLIQIFMDAGFCVTNPTCGACLGMSNGVLAEGEVCASTTNRNFMGRMGKGGMVHLLSPATAAASAIEGKIADPRNYL.

Positions 308, 368, and 371 each coordinate [4Fe-4S] cluster.

It belongs to the aconitase/IPM isomerase family. LeuC type 2 subfamily. As to quaternary structure, heterodimer of LeuC and LeuD. [4Fe-4S] cluster is required as a cofactor.

It catalyses the reaction (2R,3S)-3-isopropylmalate = (2S)-2-isopropylmalate. It participates in amino-acid biosynthesis; L-leucine biosynthesis; L-leucine from 3-methyl-2-oxobutanoate: step 2/4. Catalyzes the isomerization between 2-isopropylmalate and 3-isopropylmalate, via the formation of 2-isopropylmaleate. The protein is 3-isopropylmalate dehydratase large subunit of Citrifermentans bemidjiense (strain ATCC BAA-1014 / DSM 16622 / JCM 12645 / Bem) (Geobacter bemidjiensis).